The following is a 552-amino-acid chain: Urocanate hydratase (552 aa).

NAD(+) is bound by residues Gly-50–Gly-51, Gln-128, Gly-174–Gly-176, Glu-194, Arg-199, Gln-261–His-265, Tyr-271–Ile-272, and Tyr-320. Cys-408 is an active-site residue. Gly-490 contacts NAD(+).

Belongs to the urocanase family. NAD(+) is required as a cofactor.

Its subcellular location is the cytoplasm. The enzyme catalyses 4-imidazolone-5-propanoate = trans-urocanate + H2O. It participates in amino-acid degradation; L-histidine degradation into L-glutamate; N-formimidoyl-L-glutamate from L-histidine: step 2/3. Catalyzes the conversion of urocanate to 4-imidazolone-5-propionate. The protein is Urocanate hydratase of Bdellovibrio bacteriovorus (strain ATCC 15356 / DSM 50701 / NCIMB 9529 / HD100).